Consider the following 290-residue polypeptide: Nucleoid occlusion protein (290 aa).

The segment at residues 153 to 172 (EALAQRLGKGQSTIANKLRL) is a DNA-binding region (H-T-H motif).

Belongs to the ParB family.

It is found in the cytoplasm. It localises to the nucleoid. Its function is as follows. Effects nucleoid occlusion by binding relatively nonspecifically to DNA and preventing the assembly of the division machinery in the vicinity of the nucleoid, especially under conditions that disturb the cell cycle. It helps to coordinate cell division and chromosome segregation by preventing the formation of the Z ring through the nucleoid, which would cause chromosome breakage. This is Nucleoid occlusion protein from Bacillus cereus (strain AH187).